The chain runs to 417 residues: Tyrosine--tRNA ligase (417 aa).

Tyr40 contributes to the L-tyrosine binding site. The 'HIGH' region motif lies at 45 to 54 (ATAASLHVGH). L-tyrosine-binding residues include Tyr177 and Gln181. The short motif at 237 to 241 (KMGKS) is the 'KMSKS' region element. Position 240 (Lys240) interacts with ATP. The region spanning 351-414 (ISVVQLITRS…AGRKRHALIK (64 aa)) is the S4 RNA-binding domain.

The protein belongs to the class-I aminoacyl-tRNA synthetase family. TyrS type 1 subfamily. In terms of assembly, homodimer.

The protein resides in the cytoplasm. The enzyme catalyses tRNA(Tyr) + L-tyrosine + ATP = L-tyrosyl-tRNA(Tyr) + AMP + diphosphate + H(+). Catalyzes the attachment of tyrosine to tRNA(Tyr) in a two-step reaction: tyrosine is first activated by ATP to form Tyr-AMP and then transferred to the acceptor end of tRNA(Tyr). The polypeptide is Tyrosine--tRNA ligase (Dinoroseobacter shibae (strain DSM 16493 / NCIMB 14021 / DFL 12)).